The sequence spans 356 residues: Homoserine O-acetyltransferase (356 aa).

Positions 49 to 337 constitute an AB hydrolase-1 domain; sequence VLICHALTGS…KSTHGHDAFL (289 aa). The Nucleophile role is filled by serine 143. Substrate is bound at residue arginine 212. Residues aspartate 304 and histidine 333 contribute to the active site. Aspartate 334 provides a ligand contact to substrate.

It belongs to the AB hydrolase superfamily. MetX family. As to quaternary structure, homodimer.

The protein resides in the cytoplasm. The enzyme catalyses L-homoserine + acetyl-CoA = O-acetyl-L-homoserine + CoA. It participates in amino-acid biosynthesis; L-methionine biosynthesis via de novo pathway; O-acetyl-L-homoserine from L-homoserine: step 1/1. Its function is as follows. Transfers an acetyl group from acetyl-CoA to L-homoserine, forming acetyl-L-homoserine. In Nostoc punctiforme (strain ATCC 29133 / PCC 73102), this protein is Homoserine O-acetyltransferase.